The following is a 206-amino-acid chain: Histidine biosynthesis bifunctional protein HisIE (206 aa).

A phosphoribosyl-AMP cyclohydrolase region spans residues 1-114 (MLKKINFIDI…FQVPSENLFF (114 aa)). A phosphoribosyl-ATP pyrophosphohydrolase region spans residues 115 to 206 (LHDLDCMLKF…NLKMRSNKQV (92 aa)).

This sequence in the N-terminal section; belongs to the PRA-CH family. The protein in the C-terminal section; belongs to the PRA-PH family.

It localises to the cytoplasm. It carries out the reaction 1-(5-phospho-beta-D-ribosyl)-ATP + H2O = 1-(5-phospho-beta-D-ribosyl)-5'-AMP + diphosphate + H(+). It catalyses the reaction 1-(5-phospho-beta-D-ribosyl)-5'-AMP + H2O = 1-(5-phospho-beta-D-ribosyl)-5-[(5-phospho-beta-D-ribosylamino)methylideneamino]imidazole-4-carboxamide. The protein operates within amino-acid biosynthesis; L-histidine biosynthesis; L-histidine from 5-phospho-alpha-D-ribose 1-diphosphate: step 2/9. Its pathway is amino-acid biosynthesis; L-histidine biosynthesis; L-histidine from 5-phospho-alpha-D-ribose 1-diphosphate: step 3/9. In Buchnera aphidicola subsp. Baizongia pistaciae (strain Bp), this protein is Histidine biosynthesis bifunctional protein HisIE (hisI).